A 175-amino-acid polypeptide reads, in one-letter code: MIHSVLIFNNDGLPRLMKFYTKVDIPTQKLLLQQVHSLISTRSAQECSFITPPSLLEDLDDIKVIYRHYATLYFVFIVDDQESELGILDLIQVFVECLDKCFSNVCELDLVFGWQVLQTVLEEIVQGGMVIDTNINRIVAAVDEANSQKNVNSNGSTISASILSSLSRDRGFWGR.

The protein belongs to the adaptor complexes small subunit family. In terms of assembly, adaptor protein complex 3 (AP-3) is a heterotetramer composed of 2 large adaptins, a medium adaptin and a small adaptin.

The protein resides in the golgi apparatus. It localises to the cytoplasmic vesicle membrane. In terms of biological role, part of the AP-3 complex, an adapter-related complex which is not clathrin-associated. The complex is associated with the Golgi region as well as more peripheral structures. It facilitates the budding of vesicles from the Golgi membrane. Involved in vacuolar trafficking and contributes to hyphal growth and pathogenesis. In Candida albicans (strain SC5314 / ATCC MYA-2876) (Yeast), this protein is Clathrin-associated protein AP-3 complex component APS3 (APS3).